The chain runs to 133 residues: Probable non-specific lipid-transfer protein 2 (133 aa).

The N-terminal stretch at 1–31 is a signal peptide; that stretch reads MRTVSMAALVVIAAALAWTSSAELASAPAPG. 4 disulfides stabilise this stretch: Cys35-Cys83, Cys45-Cys60, Cys61-Cys106, and Cys81-Cys121.

The protein belongs to the plant LTP family.

Plant non-specific lipid-transfer proteins transfer phospholipids as well as galactolipids across membranes. May play a role in wax or cutin deposition in the cell walls of expanding epidermal cells and certain secretory tissues. This chain is Probable non-specific lipid-transfer protein 2, found in Parietaria judaica (Pellitory-of-the-wall).